The following is a 235-amino-acid chain: uncharacterized protein (235 aa).

The N-acetyltransferase domain maps to 82–221 (LAFKKFPPDP…DTGELIRESP (140 aa)).

Belongs to the acetyltransferase family.

The protein localises to the golgi apparatus membrane. It localises to the endoplasmic reticulum membrane. This is an uncharacterized protein from Schizosaccharomyces pombe (strain 972 / ATCC 24843) (Fission yeast).